Consider the following 251-residue polypeptide: Ubiquinone/menaquinone biosynthesis C-methyltransferase UbiE (251 aa).

S-adenosyl-L-methionine is bound by residues threonine 74, aspartate 95, and 123 to 124 (NA).

It belongs to the class I-like SAM-binding methyltransferase superfamily. MenG/UbiE family.

It carries out the reaction a 2-demethylmenaquinol + S-adenosyl-L-methionine = a menaquinol + S-adenosyl-L-homocysteine + H(+). It catalyses the reaction a 2-methoxy-6-(all-trans-polyprenyl)benzene-1,4-diol + S-adenosyl-L-methionine = a 5-methoxy-2-methyl-3-(all-trans-polyprenyl)benzene-1,4-diol + S-adenosyl-L-homocysteine + H(+). Its pathway is quinol/quinone metabolism; menaquinone biosynthesis; menaquinol from 1,4-dihydroxy-2-naphthoate: step 2/2. It participates in cofactor biosynthesis; ubiquinone biosynthesis. Methyltransferase required for the conversion of demethylmenaquinol (DMKH2) to menaquinol (MKH2) and the conversion of 2-polyprenyl-6-methoxy-1,4-benzoquinol (DDMQH2) to 2-polyprenyl-3-methyl-6-methoxy-1,4-benzoquinol (DMQH2). This Shewanella sp. (strain ANA-3) protein is Ubiquinone/menaquinone biosynthesis C-methyltransferase UbiE.